We begin with the raw amino-acid sequence, 614 residues long: UvrABC system protein C (614 aa).

A GIY-YIG domain is found at 19-97; the sequence is SLPGCYLWKN…IKKYNPKFNV (79 aa). The 36-residue stretch at 208-243 folds into the UVR domain; it reads ERLVADLKKAMMDASSKMEYERAGFLKQRIEKINQL.

The protein belongs to the UvrC family. In terms of assembly, interacts with UvrB in an incision complex.

The protein localises to the cytoplasm. Functionally, the UvrABC repair system catalyzes the recognition and processing of DNA lesions. UvrC both incises the 5' and 3' sides of the lesion. The N-terminal half is responsible for the 3' incision and the C-terminal half is responsible for the 5' incision. This Leptospira biflexa serovar Patoc (strain Patoc 1 / Ames) protein is UvrABC system protein C.